A 377-amino-acid polypeptide reads, in one-letter code: MGEIQTLNEQHSVGKPVIRLSGISKSFDGKEIIGNLNLDVNHGEFLTILGPSGCGKTTVLRMIAGFETADQGQILLDDQDVTQVPAEQRHVNTVFQSYALFPHMTVFENVAFGLRMQKVPQSEIEPRVMEALRMVRLAEMAQRKPHQLSGGQQQRIAIARAVVNKPKVLLLDESLSALDYKLRKQMQSELKQLQRQLGITFIFVTHDQEEALSMSDRIIVMRSGKIEQDGSPREIYEDPKNLFVARFIGEINVFQATTIDRIDEKRIRVDIEGIESIVYYEDEVKAGDKLQVLLRPEDLRIEEIKESEEKGIVGHVTDRTYKGMTLESVVELESGMCVMVSEFFNEDDPDVDHSIGQKVAVTWVESWEVVLNDEQKA.

Residues 18-248 form the ABC transporter domain; sequence IRLSGISKSF…PKNLFVARFI (231 aa). 50-57 is a binding site for ATP; it reads GPSGCGKT.

The protein belongs to the ABC transporter superfamily. Spermidine/putrescine importer (TC 3.A.1.11.1) family. In terms of assembly, the complex is composed of two ATP-binding proteins (PotA), two transmembrane proteins (PotB and PotC) and a solute-binding protein (PotD).

It is found in the cell inner membrane. The catalysed reaction is ATP + H2O + polyamine-[polyamine-binding protein]Side 1 = ADP + phosphate + polyamineSide 2 + [polyamine-binding protein]Side 1.. Part of the ABC transporter complex PotABCD involved in spermidine/putrescine import. Responsible for energy coupling to the transport system. This chain is Spermidine/putrescine import ATP-binding protein PotA, found in Vibrio cholerae serotype O1 (strain ATCC 39315 / El Tor Inaba N16961).